The primary structure comprises 106 residues: Gas vesicle protein J (106 aa).

It belongs to the gas vesicle GvpA family.

Its subcellular location is the gas vesicle. Functionally, a minor component of the gas vesicle, might be involved in nucleating gas vesicle formation. Gas vesicles are hollow, gas filled proteinaceous nanostructures found in some microorganisms. It is not clear what function gas vesicles perform in soil bacteria. The sequence is that of Gas vesicle protein J from Streptomyces sp. (strain CB03234).